A 305-amino-acid chain; its full sequence is MHTDLGPDQKAEVLIEALPWLEEFFGKTIVIKYGGNAMVNDHLKECFAEDMVFLRQVGIHPVVVHGGGPQISQMLKALGIHSEFKGGLRVTTPEAMDVVRMVLTGKVSRELVGLINAHGPLAVGLSGEDAALFSASQRKPIIDGEPTDIGLVGDVVGVDASAVVDLIHAGRIPVVSSVAPNEDDATEVLNVNADSAAAALASALGAHKLVILTDVDGLYADWPDKNSLVGRIGVEDLRDLLPELESGMRPKMEACVRAIDGGVQQAHIIDGRKPHSILNEIFTTAGVGTMVEPGEGMELRSSYDL.

Substrate-binding positions include 67 to 68, arginine 89, and asparagine 190; that span reads GG.

Belongs to the acetylglutamate kinase family. ArgB subfamily.

The protein localises to the cytoplasm. It catalyses the reaction N-acetyl-L-glutamate + ATP = N-acetyl-L-glutamyl 5-phosphate + ADP. Its pathway is amino-acid biosynthesis; L-arginine biosynthesis; N(2)-acetyl-L-ornithine from L-glutamate: step 2/4. Its function is as follows. Catalyzes the ATP-dependent phosphorylation of N-acetyl-L-glutamate. The chain is Acetylglutamate kinase from Bifidobacterium animalis subsp. lactis (strain AD011).